Reading from the N-terminus, the 128-residue chain is Small ribosomal subunit protein uS13 (128 aa).

The span at 95–118 (GLPVRGQRTHTNARTRKGPKKGLV) shows a compositional bias: basic residues. The disordered stretch occupies residues 95 to 128 (GLPVRGQRTHTNARTRKGPKKGLVRKAAAPAPMA).

It belongs to the universal ribosomal protein uS13 family. Part of the 30S ribosomal subunit. Forms a loose heterodimer with protein S19. Forms two bridges to the 50S subunit in the 70S ribosome.

Functionally, located at the top of the head of the 30S subunit, it contacts several helices of the 16S rRNA. In the 70S ribosome it contacts the 23S rRNA (bridge B1a) and protein L5 of the 50S subunit (bridge B1b), connecting the 2 subunits; these bridges are implicated in subunit movement. Contacts the tRNAs in the A and P-sites. The sequence is that of Small ribosomal subunit protein uS13 from Anaeromyxobacter dehalogenans (strain 2CP-1 / ATCC BAA-258).